Here is a 660-residue protein sequence, read N- to C-terminus: RNA polymerase II-associated protein 3 (660 aa).

The stretch at 8–41 (IELQLQMKQNAEDLQDFMREMESWEKDIKQKDAK) is one TPR 1 repeat. 2 disordered regions span residues 35-80 (IKQK…QEDC) and 106-125 (DKDN…EDAI). Basic residues predominate over residues 60–69 (DFKKKKKNKP). The span at 71 to 80 (PPLEKSQEDC) shows a compositional bias: basic and acidic residues. TPR repeat units lie at residues 132–165 (ALSE…DPYN), 167–199 (ILPT…NRDY), 200–233 (AKAY…DANN), 284–317 (AIMQ…DNTN), 319–351 (LLPA…DASY), 352–385 (CKAF…DPGN), and 502–539 (GSCE…GIPA). The segment at 496–517 (EISDTPGSCEPTTGEDYLTSRP) is disordered.

It belongs to the RPAP3 family.

Its function is as follows. May for an interface between the RNA polymerase II enzyme and chaperone/scaffolding protein. This is RNA polymerase II-associated protein 3 (rpap3) from Xenopus laevis (African clawed frog).